The following is a 426-amino-acid chain: Tubby protein homolog 1 (426 aa).

A required for localization to cilia in AWB sensory neurons region spans residues 16 to 28 (QRKMLEDKQKQKR). Residues 19-39 (MLEDKQKQKRHQSAGSVRTTS) are disordered.

This sequence belongs to the TUB family. In terms of assembly, interacts with rgb-3. In terms of tissue distribution, expressed in ciliated sensory neurons.

It is found in the cytoplasm. Its subcellular location is the cell projection. It localises to the axon. The protein localises to the dendrite. The protein resides in the cilium. Functionally, has a role in fat regulation independent of daf-16. Implicated in ciliar sensory function which is required for normal sensory behavior such as chemotaxis. Required for extension and growth of sensory neuronal cilia during postembryonic development, potentially via mediating signaling protein transport and localization of PI(4,5)P2 to the ciliary base. Functions in life span control via the insulin/IGF-1 pathway. Thought to be involved in neuronal trafficking. This Caenorhabditis elegans protein is Tubby protein homolog 1.